The primary structure comprises 220 residues: Thiopurine S-methyltransferase (220 aa).

Positions 10, 45, 66, and 123 each coordinate S-adenosyl-L-methionine.

This sequence belongs to the class I-like SAM-binding methyltransferase superfamily. TPMT family.

It is found in the cytoplasm. It carries out the reaction S-adenosyl-L-methionine + a thiopurine = S-adenosyl-L-homocysteine + a thiopurine S-methylether.. The protein is Thiopurine S-methyltransferase of Pseudomonas syringae pv. tomato (strain ATCC BAA-871 / DC3000).